The primary structure comprises 141 residues: Hemoglobin subunit beta-C(NA) (141 aa).

The Globin domain occupies 1-141 (PBKALITGFW…VASALAHRYH (141 aa)). Residues His-58 and His-87 each coordinate heme b.

This sequence belongs to the globin family. As to quaternary structure, heterotetramer of two alpha chains and two beta chains. In terms of tissue distribution, red blood cells.

Its function is as follows. Involved in oxygen transport from the lung to the various peripheral tissues. The polypeptide is Hemoglobin subunit beta-C(NA) (Ammotragus lervia (Barbary sheep)).